We begin with the raw amino-acid sequence, 181 residues long: ATP-dependent protease subunit HslV (181 aa).

Residue threonine 7 is part of the active site. Residues glycine 164, cysteine 167, and threonine 170 each contribute to the Na(+) site.

The protein belongs to the peptidase T1B family. HslV subfamily. As to quaternary structure, a double ring-shaped homohexamer of HslV is capped on each side by a ring-shaped HslU homohexamer. The assembly of the HslU/HslV complex is dependent on binding of ATP.

The protein localises to the cytoplasm. It carries out the reaction ATP-dependent cleavage of peptide bonds with broad specificity.. Its activity is regulated as follows. Allosterically activated by HslU binding. Its function is as follows. Protease subunit of a proteasome-like degradation complex believed to be a general protein degrading machinery. The sequence is that of ATP-dependent protease subunit HslV from Shouchella clausii (strain KSM-K16) (Alkalihalobacillus clausii).